Here is a 95-residue protein sequence, read N- to C-terminus: Pyrimidine/purine nucleoside phosphorylase (95 aa).

Belongs to the nucleoside phosphorylase PpnP family.

The enzyme catalyses a purine D-ribonucleoside + phosphate = a purine nucleobase + alpha-D-ribose 1-phosphate. It catalyses the reaction adenosine + phosphate = alpha-D-ribose 1-phosphate + adenine. It carries out the reaction cytidine + phosphate = cytosine + alpha-D-ribose 1-phosphate. The catalysed reaction is guanosine + phosphate = alpha-D-ribose 1-phosphate + guanine. The enzyme catalyses inosine + phosphate = alpha-D-ribose 1-phosphate + hypoxanthine. It catalyses the reaction thymidine + phosphate = 2-deoxy-alpha-D-ribose 1-phosphate + thymine. It carries out the reaction uridine + phosphate = alpha-D-ribose 1-phosphate + uracil. The catalysed reaction is xanthosine + phosphate = alpha-D-ribose 1-phosphate + xanthine. In terms of biological role, catalyzes the phosphorolysis of diverse nucleosides, yielding D-ribose 1-phosphate and the respective free bases. Can use uridine, adenosine, guanosine, cytidine, thymidine, inosine and xanthosine as substrates. Also catalyzes the reverse reactions. The sequence is that of Pyrimidine/purine nucleoside phosphorylase from Edwardsiella ictaluri (strain 93-146).